The sequence spans 467 residues: Iroquois-class homeodomain protein irx-1 (467 aa).

A DNA-binding region (homeobox; TALE-type) is located at residues 126 to 188 (DPGRPKNATR…NARRRLKKEN (63 aa)). 3 disordered regions span residues 198–307 (EDDN…PHNK), 319–342 (SPDG…PIQH), and 410–467 (SLSS…LPSA). Acidic residues-rich tracts occupy residues 215–225 (EDDEEIDLESI) and 233–244 (NDGEQSNEEEDE). Positions 245–262 (KLEHLRQGEKESFKKESE) are enriched in basic and acidic residues. A compositionally biased stretch (basic and acidic residues) spans 415–431 (KTPERTSPKHSDRENLP). Over residues 447–460 (RENTLSQQEGTSRI) the composition is skewed to polar residues.

The protein belongs to the TALE/IRO homeobox family. As to expression, expressed in the neural plate in overlapping patterns with other irx members, which all share an anterior border of expression. Also expressed in the mesoderm, placodes and notochord. Broadly expressed in the tailbud rhombencephalon (hindbrain). Outside the nervous system and at tailbud stages, expressed in the developing otic vesicle, branchial arches, prospective heart region and pronephros.

It localises to the nucleus. Functionally, acts partially redundantly with other irx members in neural patterning. Required for formation of the posterior forebrain, midbrain, hindbrain, and to a lesser extent, spinal cord. Acts early in neural plate development to induce expression of some but not all proneural genes, and specify a neural precursor state. Also up-regulates repressors that prevent neuronal differentiation. Patterns the neuroectoderm in both the anterior/posterior and dorsal/ventral axes. Acts primarily as a transcriptional repressor during neural development, and binds to the bmp4 promoter to repress gene expression and thus mediate down-regulation of bmp4 by wnt signaling. Controls multiple processes through bmp4-repression including neural plate development, neural crest specification and Spemann organizer development. Involved in the specification of the preplacodal field at the anterior border of the neural plate. Regulates the genetic cascade of interactions that are necessary for positioning the isthmus organizer and the formation of the midbrain-hindbrain boundary. Required during at least two stages of pronephros kidney development; during neurula stages, maintains transcription of key renal genes to define the size and identity of the pronephric anlage, probably in part through regulation of bmp-signaling. Subsequently required for proper formation of the intermediate tubule segment of the pronephros. Acts principally as a transcriptional activator during pronephros development. The polypeptide is Iroquois-class homeodomain protein irx-1 (Xenopus tropicalis (Western clawed frog)).